The following is a 220-amino-acid chain: Fructose-6-phosphate aldolase 2 (220 aa).

The Schiff-base intermediate with substrate role is filled by K85.

The protein belongs to the transaldolase family. Type 3A subfamily. Homodecamer.

The protein resides in the cytoplasm. It catalyses the reaction beta-D-fructose 6-phosphate = dihydroxyacetone + D-glyceraldehyde 3-phosphate. Its function is as follows. Catalyzes the reversible formation of fructose 6-phosphate from dihydroxyacetone and D-glyceraldehyde 3-phosphate via an aldolization reaction. Can utilize hydroxyacetone as an alternative donor substrate. Is also able to catalyze the direct self-aldol addition of glycolaldehyde. Is less catalytically efficient than the isozyme FsaA. Does not display transaldolase activity. This Escherichia coli (strain K12) protein is Fructose-6-phosphate aldolase 2 (fsaB).